Reading from the N-terminus, the 140-residue chain is Sex-regulated protein janus-B (140 aa).

Substrate is bound at residue Arg42. His69 acts as the Proton acceptor in catalysis. 110–112 contributes to the substrate binding site; sequence CKT.

It belongs to the janus family.

In terms of biological role, janA and janB regulate somatic sex differentiation. The polypeptide is Sex-regulated protein janus-B (janB) (Drosophila pseudoobscura pseudoobscura (Fruit fly)).